Reading from the N-terminus, the 125-residue chain is Cyclin-dependent protein kinase inhibitor SMR16 (125 aa).

Functionally, probable cyclin-dependent protein kinase (CDK) inhibitor that functions as a repressor of mitosis in the endoreduplication cell cycle. The chain is Cyclin-dependent protein kinase inhibitor SMR16 from Arabidopsis thaliana (Mouse-ear cress).